The sequence spans 256 residues: Triosephosphate isomerase (256 aa).

Position 9–11 (9–11 (NWK)) interacts with substrate. Residue His95 is the Electrophile of the active site. Glu167 serves as the catalytic Proton acceptor. Substrate-binding positions include Gly173, Ser212, and 233–234 (GG).

Belongs to the triosephosphate isomerase family. In terms of assembly, homodimer.

Its subcellular location is the cytoplasm. It carries out the reaction D-glyceraldehyde 3-phosphate = dihydroxyacetone phosphate. It functions in the pathway carbohydrate biosynthesis; gluconeogenesis. The protein operates within carbohydrate degradation; glycolysis; D-glyceraldehyde 3-phosphate from glycerone phosphate: step 1/1. In terms of biological role, involved in the gluconeogenesis. Catalyzes stereospecifically the conversion of dihydroxyacetone phosphate (DHAP) to D-glyceraldehyde-3-phosphate (G3P). This is Triosephosphate isomerase from Proteus mirabilis (strain HI4320).